Consider the following 311-residue polypeptide: L-lactate dehydrogenase (311 aa).

Residues Val12, Asp33, Lys38, Tyr63, and 77 to 78 (GA) contribute to the NAD(+) site. Residues Gln80 and Arg86 each contribute to the substrate site. Residues Ser99, 116-118 (VTN), and Ser141 contribute to the NAD(+) site. A substrate-binding site is contributed by 118-121 (NPVD). A substrate-binding site is contributed by 146–149 (DSSR). Positions 151 and 166 each coordinate beta-D-fructose 1,6-bisphosphate. His173 serves as the catalytic Proton acceptor. Phosphotyrosine is present on Tyr219. Thr228 is a binding site for substrate.

It belongs to the LDH/MDH superfamily. LDH family. In terms of assembly, homotetramer.

The protein localises to the cytoplasm. The enzyme catalyses (S)-lactate + NAD(+) = pyruvate + NADH + H(+). It participates in fermentation; pyruvate fermentation to lactate; (S)-lactate from pyruvate: step 1/1. Allosterically activated by fructose 1,6-bisphosphate (FBP). Its function is as follows. Catalyzes the conversion of lactate to pyruvate. The chain is L-lactate dehydrogenase from Thermoanaerobacterium saccharolyticum (strain DSM 8691 / JW/SL-YS485).